A 303-amino-acid chain; its full sequence is Putative 1-phosphofructokinase (303 aa).

Residues 217-222 and 249-250 each bind ATP; these read SDGDKG and GD. The Proton acceptor role is filled by D250.

Belongs to the carbohydrate kinase PfkB family.

It carries out the reaction beta-D-fructose 1-phosphate + ATP = beta-D-fructose 1,6-bisphosphate + ADP + H(+). Functionally, catalyzes the ATP-dependent phosphorylation of fructose-l-phosphate to fructose-l,6-bisphosphate. The protein is Putative 1-phosphofructokinase (fruK) of Mycoplasma genitalium (strain ATCC 33530 / DSM 19775 / NCTC 10195 / G37) (Mycoplasmoides genitalium).